Reading from the N-terminus, the 83-residue chain is Mu-theraphotoxin-Hhn2j 2 (83 aa).

The first 21 residues, 1-21 (MKASMFLALAGLVLLFVVGYA), serve as a signal peptide directing secretion. Positions 22–48 (SESEEKEFPIELLSKIFAVDVFKGEDR) are excised as a propeptide. Intrachain disulfides connect cysteine 50-cysteine 65, cysteine 57-cysteine 70, and cysteine 64-cysteine 77. Leucine 81 carries the leucine amide modification.

Belongs to the neurotoxin 10 (Hwtx-1) family. 15 (Hntx-3) subfamily. Monomer. As to expression, expressed by the venom gland.

The protein resides in the secreted. In terms of biological role, lethal neurotoxin. Selectively blocks tetrodotoxin-sensitive voltage-gated sodium channels (Nav). Does not affect tetrodotoxin-resistant voltage-gated sodium channels or calcium channels. The chain is Mu-theraphotoxin-Hhn2j 2 from Cyriopagopus hainanus (Chinese bird spider).